The chain runs to 182 residues: Ribosome maturation factor RimM (182 aa).

The PRC barrel domain maps to 103–182; it reads EGDYYWKDLM…SIEVDWDPGF (80 aa).

This sequence belongs to the RimM family. In terms of assembly, binds ribosomal protein uS19.

The protein localises to the cytoplasm. In terms of biological role, an accessory protein needed during the final step in the assembly of 30S ribosomal subunit, possibly for assembly of the head region. Essential for efficient processing of 16S rRNA. May be needed both before and after RbfA during the maturation of 16S rRNA. It has affinity for free ribosomal 30S subunits but not for 70S ribosomes. The polypeptide is Ribosome maturation factor RimM (Escherichia coli O139:H28 (strain E24377A / ETEC)).